A 354-amino-acid polypeptide reads, in one-letter code: Guanine nucleotide-binding protein G(i) subunit alpha-1 (354 aa).

The N-myristoyl glycine moiety is linked to residue glycine 2. Residue cysteine 3 is the site of S-palmitoyl cysteine attachment. The 323-residue stretch at 32-354 (REVKLLLLGA…KNNLKDCGLF (323 aa)) folds into the G-alpha domain. A G1 motif region spans residues 35 to 48 (KLLLLGAGESGKST). GTP-binding positions include 43–48 (ESGKST), 150–151 (DS), and 175–178 (LRTR). Serine 47 lines the Mg(2+) pocket. The tract at residues 173–181 (DVLRTRVKT) is G2 motif. Threonine 181 is a binding site for Mg(2+). The segment at 196-205 (FKMFDVGGQR) is G3 motif. GTP is bound by residues 200-204 (DVGGQ), 269-272 (NKKD), and alanine 326. Residues 265 to 272 (ILFLNKKD) are G4 motif. The interval 324–329 (TCATDT) is G5 motif.

Belongs to the G-alpha family. G(i/o/t/z) subfamily. As to quaternary structure, heterotrimeric G proteins are composed of 3 units; alpha, beta and gamma. The alpha chain contains the guanine nucleotide binding site. Part of a spindle orientation complex. Identified in complex with the beta subunit GNB1 and the gamma subunit GNG1. Identified in complex with the beta subunit GNB1 and the gamma subunit GNG2. GTP binding causes dissociation of the heterotrimer, liberating the individual subunits so that they can interact with downstream effector proteins. Myristoylation at Gly-2 is required for membrane anchoring before palmitoylation. Post-translationally, palmitoylation at Cys-3 varies with membrane lipid composition.

It localises to the nucleus. It is found in the cytoplasm. Its subcellular location is the cell membrane. The protein resides in the cytoskeleton. The protein localises to the microtubule organizing center. It localises to the centrosome. It is found in the cell cortex. Its subcellular location is the membrane. The enzyme catalyses GTP + H2O = GDP + phosphate + H(+). Guanine nucleotide-binding proteins (G proteins) function as transducers downstream of G protein-coupled receptors (GPCRs) in numerous signaling cascades. The alpha chain contains the guanine nucleotide binding site and alternates between an active, GTP-bound state and an inactive, GDP-bound state. Signaling by an activated GPCR promotes GDP release and GTP binding. The alpha subunit has a low GTPase activity that converts bound GTP to GDP, thereby terminating the signal. Both GDP release and GTP hydrolysis are modulated by numerous regulatory proteins. Signaling is mediated via effector proteins, such as adenylate cyclase. Inhibits adenylate cyclase activity of ADCY1, ADCY5 and ADCY6, leading to decreased intracellular cAMP levels. Required for cortical dynein-dynactin complex recruitment during metaphase. The protein is Guanine nucleotide-binding protein G(i) subunit alpha-1 (GNAI1) of Gallus gallus (Chicken).